The primary structure comprises 333 residues: Protoheme IX farnesyltransferase (333 aa).

8 consecutive transmembrane segments (helical) span residues 36 to 56 (LIPL…GWPL), 61 to 81 (LVCT…LNCL), 107 to 127 (AAFA…VSGV), 130 to 150 (LAAG…TALL), 158 to 178 (IVIG…AATG), 186 to 206 (WLFA…ALLL), 243 to 263 (FLGV…LLPF), and 284 to 304 (AKGL…LLVF).

It belongs to the UbiA prenyltransferase family. Protoheme IX farnesyltransferase subfamily.

Its subcellular location is the cell inner membrane. It carries out the reaction heme b + (2E,6E)-farnesyl diphosphate + H2O = Fe(II)-heme o + diphosphate. Its pathway is porphyrin-containing compound metabolism; heme O biosynthesis; heme O from protoheme: step 1/1. Its function is as follows. Converts heme B (protoheme IX) to heme O by substitution of the vinyl group on carbon 2 of heme B porphyrin ring with a hydroxyethyl farnesyl side group. The polypeptide is Protoheme IX farnesyltransferase (Synechococcus sp. (strain WH7803)).